Reading from the N-terminus, the 211-residue chain is Urease accessory protein UreG (211 aa).

16-23 (GPVGSGKT) provides a ligand contact to GTP.

It belongs to the SIMIBI class G3E GTPase family. UreG subfamily. As to quaternary structure, homodimer. UreD, UreF and UreG form a complex that acts as a GTP-hydrolysis-dependent molecular chaperone, activating the urease apoprotein by helping to assemble the nickel containing metallocenter of UreC. The UreE protein probably delivers the nickel.

Its subcellular location is the cytoplasm. In terms of biological role, facilitates the functional incorporation of the urease nickel metallocenter. This process requires GTP hydrolysis, probably effectuated by UreG. The sequence is that of Urease accessory protein UreG from Janthinobacterium sp. (strain Marseille) (Minibacterium massiliensis).